A 120-amino-acid chain; its full sequence is Small ribosomal subunit protein uS13 (120 aa).

Positions 93-120 (RKGLPVRGQTTKNNARTRKGKKKTVGSK) are disordered. The segment covering 107–120 (ARTRKGKKKTVGSK) has biased composition (basic residues).

This sequence belongs to the universal ribosomal protein uS13 family. In terms of assembly, part of the 30S ribosomal subunit. Forms a loose heterodimer with protein S19. Forms two bridges to the 50S subunit in the 70S ribosome.

Functionally, located at the top of the head of the 30S subunit, it contacts several helices of the 16S rRNA. In the 70S ribosome it contacts the 23S rRNA (bridge B1a) and protein L5 of the 50S subunit (bridge B1b), connecting the 2 subunits; these bridges are implicated in subunit movement. Contacts the tRNAs in the A and P-sites. The sequence is that of Small ribosomal subunit protein uS13 from Helicobacter acinonychis (strain Sheeba).